The chain runs to 421 residues: Polymerase delta-interacting protein 3 (421 aa).

Alanine 2 is subject to N-acetylalanine. Residue serine 5 is modified to Phosphoserine. Arginine 33 carries the omega-N-methylarginine modification. Serine 44 and serine 127 each carry phosphoserine. Threonine 140 carries the post-translational modification Phosphothreonine. Residue lysine 200 forms a Glycyl lysine isopeptide (Lys-Gly) (interchain with G-Cter in SUMO2) linkage. Phosphoserine is present on residues serine 204, serine 215, and serine 217. A Glycyl lysine isopeptide (Lys-Gly) (interchain with G-Cter in SUMO2) cross-link involves residue lysine 223. Serine 244 is modified (phosphoserine). Lysine 248 participates in a covalent cross-link: Glycyl lysine isopeptide (Lys-Gly) (interchain with G-Cter in SUMO2). Phosphoserine is present on serine 275. The RRM domain occupies 280 to 351 (TKMTVNNLHP…QPMKCNLHMN (72 aa)). Basic and acidic residues predominate over residues 370–379 (SMKKESELPR). A disordered region spans residues 370–393 (SMKKESELPRRVNSASSSNPPAEV). Residue lysine 372 forms a Glycyl lysine isopeptide (Lys-Gly) (interchain with G-Cter in SUMO2) linkage. Phosphoserine; by RPS6KB1 is present on residues serine 383 and serine 385. Lysine 418 participates in a covalent cross-link: Glycyl lysine isopeptide (Lys-Gly) (interchain with G-Cter in SUMO2).

In terms of assembly, interacts with POLD2. Interacts with NCBP1 and EIF4A3. Associates with the multiprotein exon junction complex (EJC). Interacts with RPS6KB1 (activated). Interacts with ERH. Interacts with THOC2, DDX39B and ZC3H11A; the interactions are ATP-dependent and indicative for an association with the TREX complex. Post-translationally, phosphorylated at Ser-383 and Ser-385 by RPS6KB1.

The protein resides in the nucleus. The protein localises to the nucleus speckle. It is found in the cytoplasm. Its function is as follows. Is involved in regulation of translation. Is preferentially associated with CBC-bound spliced mRNA-protein complexes during the pioneer round of mRNA translation. Contributes to enhanced translational efficiency of spliced over nonspliced mRNAs. Recruits activated ribosomal protein S6 kinase beta-1 I/RPS6KB1 to newly synthesized mRNA. Involved in nuclear mRNA export; probably mediated by association with the TREX complex. In Homo sapiens (Human), this protein is Polymerase delta-interacting protein 3 (POLDIP3).